A 497-amino-acid polypeptide reads, in one-letter code: Acetyl-coenzyme A carboxylase carboxyl transferase subunit beta (497 aa).

Residues 217–489 (LWLQCDNCYG…NQNSNQYSQY (273 aa)) form the CoA carboxyltransferase N-terminal domain. The Zn(2+) site is built by Cys221, Cys224, Cys240, and Cys243. Residues 221–243 (CDNCYGLNYKKVLKSKMTICEQC) form a C4-type zinc finger.

It belongs to the AccD/PCCB family. In terms of assembly, acetyl-CoA carboxylase is a heterohexamer composed of biotin carboxyl carrier protein, biotin carboxylase and 2 subunits each of ACCase subunit alpha and ACCase plastid-coded subunit beta (accD). The cofactor is Zn(2+).

It is found in the plastid. The catalysed reaction is N(6)-carboxybiotinyl-L-lysyl-[protein] + acetyl-CoA = N(6)-biotinyl-L-lysyl-[protein] + malonyl-CoA. Its pathway is lipid metabolism; malonyl-CoA biosynthesis; malonyl-CoA from acetyl-CoA: step 1/1. Its function is as follows. Component of the acetyl coenzyme A carboxylase (ACC) complex. Biotin carboxylase (BC) catalyzes the carboxylation of biotin on its carrier protein (BCCP) and then the CO(2) group is transferred by the transcarboxylase to acetyl-CoA to form malonyl-CoA. This Cuscuta reflexa (Southern Asian dodder) protein is Acetyl-coenzyme A carboxylase carboxyl transferase subunit beta.